The sequence spans 503 residues: Probable cytosol aminopeptidase (503 aa).

Mn(2+) contacts are provided by Lys270 and Asp275. The active site involves Lys282. Residues Asp293, Asp352, and Glu354 each coordinate Mn(2+). The active site involves Arg356.

The protein belongs to the peptidase M17 family. Mn(2+) serves as cofactor.

The protein resides in the cytoplasm. It catalyses the reaction Release of an N-terminal amino acid, Xaa-|-Yaa-, in which Xaa is preferably Leu, but may be other amino acids including Pro although not Arg or Lys, and Yaa may be Pro. Amino acid amides and methyl esters are also readily hydrolyzed, but rates on arylamides are exceedingly low.. It carries out the reaction Release of an N-terminal amino acid, preferentially leucine, but not glutamic or aspartic acids.. In terms of biological role, presumably involved in the processing and regular turnover of intracellular proteins. Catalyzes the removal of unsubstituted N-terminal amino acids from various peptides. This chain is Probable cytosol aminopeptidase, found in Shigella dysenteriae serotype 1 (strain Sd197).